The chain runs to 226 residues: MGDKTWLPFPVVLLAALLLPRAAGFTPSLDSDFTFTLPAGQKECFYQPMPLKASLEIEYQVLDGAGLDIDFHLASPEGKTLVFEQRKSDGVHTIETEVGDYMFCFDNTFSTISEKVIFFELILDNMGEQEQEQEDWKKYITGTDMLDMKLEDILESINSIKSRLSKSGHIQTLLRAFEARDRNIQESNFDRVNFWSMVNLVVMVVVSAIQVYMLKSLFEDKRKSRT.

Residues Met1–Gly24 form the signal peptide. Topologically, residues Phe25 to Asn193 are lumenal. Residues Lys42–Leu123 form the GOLD domain. A helical membrane pass occupies residues Phe194 to Leu214. Residues Lys215 to Thr226 lie on the Cytoplasmic side of the membrane. Positions Leu217–Phe218 match the Mediates export from ER motif.

This sequence belongs to the EMP24/GP25L family. Interacts with TMED9 and TMED10.

The protein localises to the endoplasmic reticulum membrane. It localises to the golgi apparatus. It is found in the cis-Golgi network membrane. The protein resides in the endoplasmic reticulum-Golgi intermediate compartment membrane. In terms of biological role, potential role in vesicular protein trafficking, mainly in the early secretory pathway. Required for the maintenance of the Golgi apparatus; involved in protein exchange between Golgi stacks during assembly. Probably not required for COPI-vesicle-mediated retrograde transport. The chain is Transmembrane emp24 domain-containing protein 5 (TMED5) from Bos taurus (Bovine).